The primary structure comprises 269 residues: Regulatory protein RecX (269 aa).

The protein belongs to the RecX family.

It is found in the cytoplasm. Its function is as follows. Modulates RecA activity. In Listeria monocytogenes serotype 4b (strain F2365), this protein is Regulatory protein RecX.